The chain runs to 176 residues: T cell receptor beta constant 1 (176 aa).

The 110-residue stretch at 8-117 (PEVAVFEPSE…WTQDRAKPVT (110 aa)) folds into the Ig-like C1-type domain. A disulfide bridge links C30 with C95. An N-linked (GlcNAc...) asparagine glycan is attached at N69. The interval 130–144 (CGFTSVSYQQGVLSA) is connecting peptide. A helical membrane pass occupies residues 150–170 (ILLGKATLYAVLVSALVLMAM). Topologically, residues 171–176 (VKRKDF) are cytoplasmic.

As to quaternary structure, alpha-beta TR is a heterodimer composed of an alpha and beta chain; disulfide-linked. The alpha-beta TR is associated with the transmembrane signaling CD3 coreceptor proteins to form the TR-CD3 (TcR or TCR). The assembly of alpha-beta TR heterodimers with CD3 occurs in the endoplasmic reticulum where a single alpha-beta TR heterodimer associates with one CD3D-CD3E heterodimer, one CD3G-CD3E heterodimer and one CD247 homodimer forming a stable octameric structure. CD3D-CD3E and CD3G-CD3E heterodimers preferentially associate with TR alpha and TR beta chains, respectively. The association of the CD247 homodimer is the last step of TcR assembly in the endoplasmic reticulum and is required for transport to the cell surface.

It localises to the cell membrane. Constant region of T cell receptor (TR) beta chain. Alpha-beta T cell receptors are antigen specific receptors which are essential to the immune response and are present on the cell surface of T lymphocytes. Recognize peptide-major histocompatibility (MH) (pMH) complexes that are displayed by antigen presenting cells (APC), a prerequisite for efficient T cell adaptive immunity against pathogens. Binding of alpha-beta TR to pMH complex initiates TR-CD3 clustering on the cell surface and intracellular activation of LCK that phosphorylates the ITAM motifs of CD3G, CD3D, CD3E and CD247 enabling the recruitment of ZAP70. In turn, ZAP70 phosphorylates LAT, which recruits numerous signaling molecules to form the LAT signalosome. The LAT signalosome propagates signal branching to three major signaling pathways, the calcium, the mitogen-activated protein kinase (MAPK) kinase and the nuclear factor NF-kappa-B (NF-kB) pathways, leading to the mobilization of transcription factors that are critical for gene expression and essential for T cell growth and differentiation. The T cell repertoire is generated in the thymus, by V-(D)-J rearrangement. This repertoire is then shaped by intrathymic selection events to generate a peripheral T cell pool of self-MH restricted, non-autoaggressive T cells. Post-thymic interaction of alpha-beta TR with the pMH complexes shapes TR structural and functional avidity. This is T cell receptor beta constant 1 from Homo sapiens (Human).